A 132-amino-acid chain; its full sequence is Large ribosomal subunit protein uL22c (132 aa).

Belongs to the universal ribosomal protein uL22 family. As to quaternary structure, part of the 50S ribosomal subunit.

The protein localises to the plastid. It is found in the chloroplast. Its function is as follows. This protein binds specifically to 23S rRNA. In terms of biological role, the globular domain of the protein is located near the polypeptide exit tunnel on the outside of the subunit, while an extended beta-hairpin is found that lines the wall of the exit tunnel in the center of the 70S ribosome. The sequence is that of Large ribosomal subunit protein uL22c (rpl22) from Populus trichocarpa (Western balsam poplar).